The chain runs to 132 residues: C-glycoside deglycosidase beta subunit (132 aa).

The protein belongs to the C-glycoside deglycosidase beta subunit family. Heterodimer composed of an alpha subunit (CarB2) and a beta subunit (CarC2). Requires a divalent metal cation as cofactor.

It catalyses the reaction 3''-dehydroorientin = 1,5-anhydro-D-erythro-hex-1-en-3-ulose + luteolin. Its activity is regulated as follows. Activity is strongly reduced in the presence of chelating agents. Functionally, carbon-carbon bond-cleaving enzyme which participates in the metabolism of C-glycosides. Acts on the C8-glycosylated compound 3''-dehydroorientin (3''-oxo-orientin). This chain is C-glycoside deglycosidase beta subunit, found in Arthrobacter globiformis (strain ATCC 8010 / DSM 20124 / JCM 1332 / NBRC 12137 / NCIMB 8907 / NRRL B-2979 / 168).